Consider the following 402-residue polypeptide: Protein lag-2 (402 aa).

Residues 1–15 (MIAYFLLLLTCLPVL) form the signal peptide. Residues 16 to 279 (QARVEVHQEF…TTTTPTTVEI (264 aa)) lie on the Extracellular side of the membrane. N72 and N105 each carry an N-linked (GlcNAc...) asparagine glycan. Positions 122–166 (VTCARNYFGNRCENFCDAHLAKAARKRCDAMGRLRCDIGWMGPHC) constitute a DSL domain. Disulfide bonds link C124-C133, C137-C149, C157-C166, C175-C183, C177-C204, C206-C215, C233-C245, C239-C254, and C256-C265. 2 consecutive EGF-like domains span residues 171–216 (DPRK…TRCE) and 229–266 (RPDA…EFCE). N194 carries an N-linked (GlcNAc...) asparagine glycan. A helical membrane pass occupies residues 280 to 306 (TVSTSGYSSAVYITVALFVIFSIIIGC). Topologically, residues 307–402 (FKYKFKPMRQ…PPSIPACHYV (96 aa)) are cytoplasmic.

As to quaternary structure, may interact with lin-12 / Notch receptor. Expressed in the gonad distal tip cell (DTC) of hermaphrodites.

The protein localises to the cell membrane. In terms of biological role, probable ligand for lin-12/Notch and glp-1/Notch receptors and involved in the mediation of Notch signaling. Involved in the lin-12/Notch pathway signaling of cell fate in vulval precursor cells (VPCs) and in the postembryonic mesodermal lineage (M lineage), acting redundantly with dsl-1 and apx-1. Functions in uterine cells to promote basement membrane mobility during tissue remodeling. Required for oocyte growth control, acting redundantly with apx-1, perhaps signaling via the glp-1/Notch pathway. Plays a role in Notch-dependent induction of left-right asymmetry in interneurons and motoneurons. Involved in maintaining the developmentally arrested larval state known as dauer, probably signaling in the glp-1/Notch pathway. Required for normal sleep bout quantity and arousal thresholds during the transition from the last larval stage to adulthood in well-fed animals. This chain is Protein lag-2, found in Caenorhabditis elegans.